The sequence spans 807 residues: Tyrosine-protein kinase receptor torso (807 aa).

The N-terminal stretch at 1 to 28 is a signal peptide; it reads MYSEGKLLKVFLIFAGFIIFSLCGEVVS. Residues 29–370 lie on the Extracellular side of the membrane; it reads QRYPPAPGLL…RAFTPGMLRW (342 aa). Disulfide bonds link C46–C61, C81–C203, C210–C239, and C259–C265. Residues N54, N171, N183, and N195 are each glycosylated (N-linked (GlcNAc...) asparagine). N-linked (GlcNAc...) asparagine glycans are attached at residues N307, N323, and N344. The chain crosses the membrane as a helical span at residues 371 to 391; it reads VWAGATAGAGCAAGGLLAATL. The Cytoplasmic portion of the chain corresponds to 392-807; it reads LCCGHRRATS…SPPVIQTKTA (416 aa). One can recognise a Protein kinase domain in the interval 439–738; the sequence is VLLHEVIGEG…PTFPELHQKL (300 aa). ATP is bound by residues 445–453 and K468; that span reads IGEGAFGVV. The Proton acceptor role is filled by D607.

The protein belongs to the protein kinase superfamily. Tyr protein kinase family. In terms of assembly, homodimer; disulfide-linked. Mg(2+) is required as a cofactor. May be auto-phosphorylated on tyrosine residues. Post-translationally, at least one of the 3 cysteine residues Cys-381, Cys-393 or Cys-394 is involved in the formation of interchain disulfide bonds. The disulfide bond sites in the extracellular region are not involved in homodimer formation.

The protein resides in the cell membrane. The catalysed reaction is L-tyrosyl-[protein] + ATP = O-phospho-L-tyrosyl-[protein] + ADP + H(+). In terms of biological role, probable receptor tyrosine kinase. During postembryonic development, involved in the initiation of metamorphosis probably by inducing the production of ecdysone in response to prothoracicotropic hormone (PTTH). Binding to PTTH stimulates activation of canonical MAPK signaling leading to ERK phosphorylation. This chain is Tyrosine-protein kinase receptor torso, found in Bombyx mori (Silk moth).